A 200-amino-acid polypeptide reads, in one-letter code: dITP/XTP pyrophosphatase (200 aa).

A substrate-binding site is contributed by 8–13 (THNPNK). Residues Glu41 and Asp71 each coordinate Mg(2+). Asp71 acts as the Proton acceptor in catalysis. Residues Thr72, 153 to 156 (FGYD), Lys176, and 181 to 182 (HR) contribute to the substrate site.

This sequence belongs to the HAM1 NTPase family. In terms of assembly, homodimer. Requires Mg(2+) as cofactor.

It carries out the reaction XTP + H2O = XMP + diphosphate + H(+). The enzyme catalyses dITP + H2O = dIMP + diphosphate + H(+). The catalysed reaction is ITP + H2O = IMP + diphosphate + H(+). Pyrophosphatase that catalyzes the hydrolysis of nucleoside triphosphates to their monophosphate derivatives, with a high preference for the non-canonical purine nucleotides XTP (xanthosine triphosphate), dITP (deoxyinosine triphosphate) and ITP. Seems to function as a house-cleaning enzyme that removes non-canonical purine nucleotides from the nucleotide pool, thus preventing their incorporation into DNA/RNA and avoiding chromosomal lesions. The protein is dITP/XTP pyrophosphatase of Caldanaerobacter subterraneus subsp. tengcongensis (strain DSM 15242 / JCM 11007 / NBRC 100824 / MB4) (Thermoanaerobacter tengcongensis).